We begin with the raw amino-acid sequence, 95 residues long: Gas vesicle protein S (95 aa).

The protein belongs to the gas vesicle GvpA family.

Its subcellular location is the gas vesicle. Probably a minor component of the gas vesicle. It is not clear what function gas vesicles perform in soil bacteria. Its function is as follows. When a minimal gvp locus (gvpA2-gvpR-gvpN-gvpF-gvpG-gvpL-gvpS-gvpK-gvpJ-gvpT-gvpU, called pNL29) is expressed in E.coli gas vesicles are made. The polypeptide is Gas vesicle protein S (Priestia megaterium (Bacillus megaterium)).